Consider the following 86-residue polypeptide: Exodeoxyribonuclease 7 small subunit (86 aa).

The protein belongs to the XseB family. In terms of assembly, heterooligomer composed of large and small subunits.

The protein localises to the cytoplasm. It carries out the reaction Exonucleolytic cleavage in either 5'- to 3'- or 3'- to 5'-direction to yield nucleoside 5'-phosphates.. Its function is as follows. Bidirectionally degrades single-stranded DNA into large acid-insoluble oligonucleotides, which are then degraded further into small acid-soluble oligonucleotides. This Agrobacterium fabrum (strain C58 / ATCC 33970) (Agrobacterium tumefaciens (strain C58)) protein is Exodeoxyribonuclease 7 small subunit.